Here is a 337-residue protein sequence, read N- to C-terminus: Protein ABHD13 (337 aa).

Residues 37-57 (FHLYGGIILLLLIFISIAGIL) form a helical; Signal-anchor for type II membrane protein membrane-spanning segment. Residues Ser193, Asp268, and His298 each act as charge relay system in the active site. The N-linked (GlcNAc...) asparagine glycan is linked to Asn299.

The protein belongs to the serine esterase family.

The protein resides in the membrane. The protein is Protein ABHD13 of Homo sapiens (Human).